Consider the following 304-residue polypeptide: DCN1-like protein 3 (304 aa).

Disordered regions lie at residues 1–86 (MGQC…AEES) and 284–304 (EGEGRGALSSGPEGLCPEEQT). A lipid anchor (N-myristoyl glycine) is attached at G2. The DCUN1 domain maps to 86 to 278 (SSLQRLEELF…LFDTFVEWEM (193 aa)).

In terms of assembly, part of a complex containing DCUN1D3, CUL3 and RBX1. Interacts (via the DCUN1 domain) with the unneddylated cullins: interacts with CUL1, CUL2, CUL3, CUL4A, CUL4B and CUL5; these interactions promote the cullin neddylation and the identity of the cullin dictates the affinity of the interaction. Interacts preferentially with CUL3; this interaction triggers the relocalization of CUL3 to the cell membrane where CUL3 is neddylated. Interacts (via DCUN1 domain) with RBX1. May also interact with regulators or subunits of cullin-RING ligases such as RNF7, ELOB and DDB1; these interactions are bridged by cullins. Interacts (via DCUN1 domain) with CAND1; this interaction is bridged by cullins and strongly inhibits cullin neddylation. These CAND-cullin-DCNL complexes can only be neddylated in the presence of a substrate adapter. Interacts (via DCUN1 domain) with the N-terminally acetylated form of UBE2M and UBE2F.

It is found in the cell membrane. It localises to the cytoplasm. Its subcellular location is the nucleus. The protein localises to the perinuclear region. Contributes to the neddylation of all cullins by transferring NEDD8 from N-terminally acetylated NEDD8-conjugating E2s enzyme to different cullin C-terminal domain-RBX complexes and may play a role in the cell cycle progression by regulating the SCF ubiquitin E3 ligase complex, after UV damage. At the cell membrane, can promote and as well inhibit cullins neddylation. This chain is DCN1-like protein 3, found in Pongo abelii (Sumatran orangutan).